The primary structure comprises 145 residues: uncharacterized protein (145 aa).

Residues 46–66 (FFFLFFLFFFFFFTFQFLVAF) traverse the membrane as a helical segment.

Its subcellular location is the membrane. This is an uncharacterized protein from Saccharomyces cerevisiae (strain ATCC 204508 / S288c) (Baker's yeast).